Reading from the N-terminus, the 162-residue chain is Transcription elongation factor GreA (162 aa).

Positions 44–72 (ENAEYHAAKEKQSHIERRIAELSDILSRA) form a coiled coil.

It belongs to the GreA/GreB family.

Necessary for efficient RNA polymerase transcription elongation past template-encoded arresting sites. The arresting sites in DNA have the property of trapping a certain fraction of elongating RNA polymerases that pass through, resulting in locked ternary complexes. Cleavage of the nascent transcript by cleavage factors such as GreA or GreB allows the resumption of elongation from the new 3'terminus. GreA releases sequences of 2 to 3 nucleotides. This Nautilia profundicola (strain ATCC BAA-1463 / DSM 18972 / AmH) protein is Transcription elongation factor GreA.